Here is an 87-residue protein sequence, read N- to C-terminus: Tachykinin-1 (87 aa).

A signal peptide spans 1 to 22 (MIRVGLILCCIFIAGVFEASSA). Residues 23–37 (DDMLTAHNLIKRSEV) constitute a propeptide that is removed on maturation. Residue Met-49 is modified to Methionine amide. A propeptide spanning residues 52–87 (SEELTRRLIQHPGSMSETSKRGPPKKVSRRPYILKK) is cleaved from the precursor. The interval 61-87 (QHPGSMSETSKRGPPKKVSRRPYILKK) is disordered. The segment covering 73 to 87 (GPPKKVSRRPYILKK) has biased composition (basic residues).

It belongs to the tachykinin family. In terms of tissue distribution, expressed in the posterior salivary gland and more specifically in the mucus-secreting gland cells.

The protein localises to the secreted. Its function is as follows. Tachykinins are active peptides which excite neurons, evoke behavioral responses, are potent vasodilators and secretagogues, and contract (directly or indirectly) many smooth muscles. The chain is Tachykinin-1 from Octopus vulgaris (Common octopus).